Here is a 137-residue protein sequence, read N- to C-terminus: 15 kDa protein A (137 aa).

A signal peptide spans 1–20; it reads MAGVWKVLVVLVGLAVVACA. 2 disulfide bridges follow: Cys-77–Cys-88 and Cys-99–Cys-116.

This sequence belongs to the cathelicidin family. Large granules of neutrophils.

It is found in the secreted. Binds to bacterial lipopolysaccharides (LPS), potentiates strongly the early antibacterial effects of BPI. Inhibits the late lethal action of BPI. The polypeptide is 15 kDa protein A (Oryctolagus cuniculus (Rabbit)).